Reading from the N-terminus, the 532-residue chain is IQ domain-containing protein IQM4 (532 aa).

Disordered stretches follow at residues 47-67 (SRTN…TGME) and 85-104 (PMNK…RNSL). Positions 56-66 (NPQEKSPKTGM) are enriched in basic and acidic residues. The segment covering 85–94 (PMNKEDEEIV) has biased composition (acidic residues). In terms of domain architecture, IQ spans 136-165 (LDAAATTLQKVYKSYRTRRNLADCAVVVEE). Disordered regions lie at residues 410–443 (SSGY…KERE) and 487–513 (PRIS…PRVR). The span at 487 to 496 (PRISPGSTRF) shows a compositional bias: polar residues. A compositionally biased stretch (pro residues) spans 499–509 (PYGPIPSPRPS).

In terms of tissue distribution, expressed in roots, cauline leaves and flowers, and at lower levels in rosette leaves, stems and siliques.

The protein resides in the cytoplasm. It is found in the nucleus. May be involved in biotic and abiotic stress responses. The chain is IQ domain-containing protein IQM4 from Arabidopsis thaliana (Mouse-ear cress).